A 1427-amino-acid polypeptide reads, in one-letter code: Lysophospholipase NTE1 (1427 aa).

The Cytoplasmic segment spans residues 1–60 (MDSLHVSSTSVLVDVVEAVETATSLVVDTAEAVATEQATPTAVISNALARSAYAAHTSLS). Residues 61–81 (YLAWAFGLWFLRLIGWVCYGI) form a helical membrane-spanning segment. Residues 82-96 (PTYVLGLLGRTINIS) are Lumenal-facing. Residues 97–117 (LQFSSLLLILIALVTVVVAVV) traverse the membrane as a helical segment. Over 118 to 1427 (RYKYLTVYSR…KRTIARRNSI (1310 aa)) the chain is Cytoplasmic. Polar residues predominate over residues 281-296 (PMTSASDVPNMSLSSD). A disordered region spans residues 281-315 (PMTSASDVPNMSLSSDGSDDLQKGEPQFGEPRLSE). Residues 615–735 (LMAA…LTKV) and 731–870 (SLTK…VASR) contribute to the a nucleoside 3',5'-cyclic phosphate site. The disordered stretch occupies residues 787-807 (GIVGGESGDAKDGKSHRKNLT). Positions 1124–1288 (LVLGGGGARG…VDNLPVSEMK (165 aa)) constitute a PNPLA domain. The short motif at 1128–1133 (GGGARG) is the GXGXXG element. Residues 1155–1159 (GTSIG) carry the GXSXG motif. The Nucleophile role is filled by Ser-1157. The active-site Proton acceptor is Asp-1275. The DGA/G motif lies at 1275–1277 (DGG).

This sequence belongs to the NTE family.

It localises to the endoplasmic reticulum membrane. The enzyme catalyses a 1-acyl-sn-glycero-3-phosphocholine + H2O = sn-glycerol 3-phosphocholine + a fatty acid + H(+). With respect to regulation, inhibited by organophosphorus esters. In terms of biological role, intracellular phospholipase B that catalyzes the double deacylation of phosphatidylcholine (PC) to glycerophosphocholine (GroPCho). Plays an important role in membrane lipid homeostasis. Responsible for the rapid PC turnover in response to inositol, elevated temperatures, or when choline is present in the growth medium. The sequence is that of Lysophospholipase NTE1 (NTE1) from Yarrowia lipolytica (strain CLIB 122 / E 150) (Yeast).